A 561-amino-acid chain; its full sequence is Sensor histidine kinase BtsS (561 aa).

Over 1–3 (MYD) the chain is Cytoplasmic. The helical transmembrane segment at 4 to 24 (FNLVLLLLQQMCVFLVIAWLM) threads the bilayer. Residues 25–43 (SKTPLFIPLMQVTVRLPHK) lie on the Periplasmic side of the membrane. Residues 44-64 (FLCYIVFSIFCIMGTWFGLHI) form a helical membrane-spanning segment. Topologically, residues 65-72 (DDSIANTR) are cytoplasmic. The helical transmembrane segment at 73-93 (AIGAVMGGLLGGPVVGGLVGL) threads the bilayer. Over 94–108 (TGGLHRYSMGGMTAL) the chain is Periplasmic. A helical membrane pass occupies residues 109 to 129 (SCMISTIVEGLLGGLVHSILI). Over 130–140 (RRGRTDKVFNP) the chain is Cytoplasmic. Residues 141–161 (ITAGAVTFVAEMVQMLIILAI) traverse the membrane as a helical segment. Over 162 to 170 (ARPYEDAVR) the chain is Periplasmic. A helical membrane pass occupies residues 171-191 (LVSNIAAPMMVTNTVGAALFM). Over 192 to 561 (RILLDKRAMF…TLRLPWRDEA (370 aa)) the chain is Cytoplasmic. The 206-residue stretch at 354 to 559 (QILAGQYERQ…RITLRLPWRD (206 aa)) folds into the Histidine kinase domain.

Autophosphorylated.

The protein localises to the cell inner membrane. It catalyses the reaction ATP + protein L-histidine = ADP + protein N-phospho-L-histidine.. Member of the two-component regulatory system BtsS/BtsR. BtsS is a high-affinity receptor for extracellular pyruvate that activates BtsR by phosphorylation. The polypeptide is Sensor histidine kinase BtsS (Escherichia coli O6:H1 (strain CFT073 / ATCC 700928 / UPEC)).